The primary structure comprises 122 residues: Heat-labile enterotoxin IIB, B chain (122 aa).

The N-terminal stretch at 1-23 (MSFKKIIKAFVIMAALVSVQAHA) is a signal peptide. Cys33 and Cys104 are joined by a disulfide.

In terms of assembly, heterohexamer of one A chain and of five B chains.

In terms of biological role, the biological activity of the toxin is produced by the A chain, which activates intracellular adenyl cyclase. This Escherichia coli protein is Heat-labile enterotoxin IIB, B chain.